Reading from the N-terminus, the 154-residue chain is MSSSLVFQGEFQHIIRIYNTNVDGRRKIQYALTCVKGVGRRFANLVCKKADIDTSKRAGELSKDEVERLTTIMNHPRQYNIPTWFLNRQKDIKDGKYSHCLANQIDVKFREDLERLKKIRAHRGVRHHFGLRVRGQKTKTTGRRGRTVGVAGRR.

This sequence belongs to the universal ribosomal protein uS13 family.

It localises to the cytoplasm. In terms of biological role, located at the top of the head of the 40S subunit, it contacts several helices of the 18S rRNA. This chain is Small ribosomal subunit protein uS13 (rps18), found in Dictyostelium discoideum (Social amoeba).